The chain runs to 575 residues: Serine/threonine-protein kinase STY46 (575 aa).

The disordered stretch occupies residues 116–140; sequence ADLDSTSNDAGHSSPTRKSIHPPPA. Polar residues predominate over residues 118-132; that stretch reads LDSTSNDAGHSSPTR. Residues 178 to 252 form the ACT domain; that stretch reads EITFSTEDKP…AKIELQSQSW (75 aa). Residues 290–543 form the Protein kinase domain; that stretch reads LKFGHKIASG…EIIEQLQEIA (254 aa). Residues 296-304 and K317 each bind ATP; that span reads IASGSYGDL. Catalysis depends on D411, which acts as the Proton acceptor. T443 carries the phosphothreonine modification.

Belongs to the protein kinase superfamily. Ser/Thr protein kinase family. In terms of processing, autophosphorylated on serine and threonine residues. Autophosphorylated at Thr-443.

Its subcellular location is the cytoplasm. The protein localises to the cytosol. The catalysed reaction is L-seryl-[protein] + ATP = O-phospho-L-seryl-[protein] + ADP + H(+). The enzyme catalyses L-threonyl-[protein] + ATP = O-phospho-L-threonyl-[protein] + ADP + H(+). With respect to regulation, activated by autophosphorylation at Thr-443. Serine/threonine protein kinase that specifically phosphorylates chloroplast precursor proteins in the cytosol within the cleavable presequences (transit peptides). May be part of a cytosolic regulatory network involved in chloroplast protein import. Does not phosphorylate mitochondrion precursor proteins. Specific for ATP and does not utilize other NTPs. Plays a role in chloroplast biogenesis and differentiation in cotyledons, possibly through phosphorylation of chloroplast preproteins. In Arabidopsis thaliana (Mouse-ear cress), this protein is Serine/threonine-protein kinase STY46.